The primary structure comprises 488 residues: Glutamyl-tRNA(Gln) amidotransferase subunit A (488 aa).

Catalysis depends on charge relay system residues Lys77 and Ser152. Ser176 functions as the Acyl-ester intermediate in the catalytic mechanism.

The protein belongs to the amidase family. GatA subfamily. As to quaternary structure, heterotrimer of A, B and C subunits.

It catalyses the reaction L-glutamyl-tRNA(Gln) + L-glutamine + ATP + H2O = L-glutaminyl-tRNA(Gln) + L-glutamate + ADP + phosphate + H(+). Allows the formation of correctly charged Gln-tRNA(Gln) through the transamidation of misacylated Glu-tRNA(Gln) in organisms which lack glutaminyl-tRNA synthetase. The reaction takes place in the presence of glutamine and ATP through an activated gamma-phospho-Glu-tRNA(Gln). This is Glutamyl-tRNA(Gln) amidotransferase subunit A from Streptococcus pyogenes serotype M49 (strain NZ131).